A 600-amino-acid polypeptide reads, in one-letter code: Autophagy-related protein 22-2 (600 aa).

The interval M1–T30 is disordered. 4 helical membrane passes run Y41–L61, S117–F137, T149–I168, and C186–P206. The disordered stretch occupies residues S234 to S257. The next 4 helical transmembrane spans lie at G271–F291, T304–V324, V378–T398, and V414–I434. N444 is a glycosylation site (N-linked (GlcNAc...) asparagine). A run of 4 helical transmembrane segments spans residues V449 to F469, Y484 to G506, K526 to V546, and G549 to A569.

This sequence belongs to the ATG22 family.

The protein resides in the vacuole membrane. Functionally, vacuolar effluxer which mediate the efflux of amino acids resulting from autophagic degradation. The release of autophagic amino acids allows the maintenance of protein synthesis and viability during nitrogen starvation. This chain is Autophagy-related protein 22-2 (atg22-2), found in Aspergillus niger (strain ATCC MYA-4892 / CBS 513.88 / FGSC A1513).